The chain runs to 253 residues: Ribonuclease HII (253 aa).

The region spanning 70–253 is the RNase H type-2 domain; the sequence is NLIAGIDEVG…KSFEPIKSML (184 aa). A divalent metal cation is bound by residues Asp-76, Glu-77, and Asp-168.

This sequence belongs to the RNase HII family. The cofactor is Mn(2+). It depends on Mg(2+) as a cofactor.

Its subcellular location is the cytoplasm. The enzyme catalyses Endonucleolytic cleavage to 5'-phosphomonoester.. Functionally, endonuclease that specifically degrades the RNA of RNA-DNA hybrids. This Streptococcus agalactiae serotype III (strain NEM316) protein is Ribonuclease HII.